A 191-amino-acid chain; its full sequence is GDP-mannose pyrophosphatase (191 aa).

GDP-alpha-D-mannose contacts are provided by residues Y17, 38–40 (KRE), R67, and 85–87 (AGL). The Nudix hydrolase domain occupies 43-180 (DRGNGATILL…EIRDGKTVLL (138 aa)). Residues A85, E100, and E104 each contribute to the Mg(2+) site. Positions 86 to 106 (GLLDNDEPEVCIRKEAIEETG) match the Nudix box motif. GDP-alpha-D-mannose-binding positions include E104, E127, 150-151 (DE), and K176. Position 151 (E151) interacts with Mg(2+).

Belongs to the Nudix hydrolase family. NudK subfamily. As to quaternary structure, homodimer. Mg(2+) serves as cofactor.

It catalyses the reaction GDP-alpha-D-mannose + H2O = alpha-D-mannose 1-phosphate + GMP + 2 H(+). Its function is as follows. Nucleoside diphosphate sugar hydrolase that hydrolyzes GDP-mannose as its preferred substrate, yielding GMP and mannose-1-phosphate. The protein is GDP-mannose pyrophosphatase (nudK) of Salmonella arizonae (strain ATCC BAA-731 / CDC346-86 / RSK2980).